Consider the following 32-residue polypeptide: CEDGGVPSASCRANTEDYRYCNACYLQEVIGK.

Isoleucine 30 is subject to Isoleucine amide.

Post-translationally, contains 2 disulfide bonds. As to expression, expressed by the venom duct.

Its subcellular location is the secreted. This is Turripeptide XIV-18 from Gemmula speciosa (Splendid gem-turris).